Consider the following 1248-residue polypeptide: Structural polyprotein (1248 aa).

Positions 1–10 are enriched in polar residues; sequence MEFIPTQTFY. The disordered stretch occupies residues 1 to 104; sequence MEFIPTQTFY…KKKKPGRRER (104 aa). Residues 22 to 44 show a composition bias toward low complexity; that stretch reads RPTIQVIRPRPRPQRQAGQLAQL. The segment at 36–68 is host transcription inhibition; it reads RQAGQLAQLISAVNKLTMRAVPQQKPRRNRKNK. Residues 60-72 are compositionally biased toward basic residues; it reads KPRRNRKNKKQKQ. The Nuclear localization signal motif lies at 61 to 99; it reads PRRNRKNKKQKQKQQAPQNNTNQKKQPPKKKPAQKKKKP. Residues 73–85 show a composition bias toward low complexity; the sequence is KQQAPQNNTNQKK. A binding to the viral RNA region spans residues 84–114; it reads KKQPPKKKPAQKKKKPGRRERMCMKIENDCI. A compositionally biased stretch (basic residues) spans 86 to 101; sequence QPPKKKPAQKKKKPGR. A ribosome-binding region spans residues 99–113; the sequence is PGRRERMCMKIENDC. C113 and C128 form a disulfide bridge. The 149-residue stretch at 113–261 folds into the Peptidase S3 domain; it reads CIFEVKHEGK…KITPEGAEEW (149 aa). The Charge relay system role is filled by H139. Positions 144–154 match the Nuclear export signal motif; sequence IDNADLAKLAF. Residues 155 to 160 form an interaction with spike glycoprotein E2 region; sequence KRSSKY. D161 serves as the catalytic Charge relay system. The segment at 183 to 193 is dimerization of the capsid protein; it reads PEGYYNWHHGA. The Charge relay system role is filled by S213. The segment at 219–223 is dimerization of the capsid protein; it reads DNKGR. The interval 262–274 is functions as an uncleaved signal peptide for the precursor of protein E3/E2; it reads SLAIPVMCLLANT. The Extracellular segment spans residues 262 to 692; it reads SLAIPVMCLL…YYYELYPTMT (431 aa). Intrachain disulfides connect C269–C278, C283–C287, C286–C318, C344–C450, C347–C353, C416–C430, C478–C591, C526–C550, and C528–C545. N273 is a glycosylation site (N-linked (GlcNAc...) asparagine; by host). Interaction with host Mxra8 receptor regions lie at residues 351–354 and 387–389; these read HSCH and HDW. Interaction with host Mxra8 receptor stretches follow at residues 509-512 and 541-547; these read QSGN and VINNCKV. 2 N-linked (GlcNAc...) asparagine; by host glycosylation sites follow: N588 and N670. Residues 693-713 form a helical membrane-spanning segment; it reads VVVVSVASFILLSMVGMAVGM. Residues 714-748 are Cytoplasmic-facing; it reads CMCARRRCITPYELTPGATVPFLLSLICCIRTAKA. Residues 716–720 form an interaction with the capsid protein region; sequence CARRR. Residues C721, C741, and C742 are each lipidated (S-palmitoyl cysteine; by host). A transient transmembrane before p62-6K protein processing region spans residues 721 to 741; that stretch reads CITPYELTPGATVPFLLSLIC. C721 and C742 are disulfide-bonded. At 749-763 the chain is on the extracellular side; it reads ATYQEAAVYLWNEQQ. The helical transmembrane segment at 764–784 threads the bilayer; the sequence is PLFWLQALIPLAALIVLCNCL. Topologically, residues 785-795 are cytoplasmic; the sequence is RLLPCCCKTLA. A helical membrane pass occupies residues 796–816; it reads FLAVMSIGAHTVSAYEHVTVI. Topologically, residues 817 to 1224 are extracellular; sequence PNTVGVPYKT…AMSWVQKITG (408 aa). Disulfide bonds link C858–C923, C871–C903, C872–C905, and C877–C887. The tract at residues 893–910 is E1 fusion peptide loop; the sequence is VYPFMWGGAYCFCDAENT. N950 and N1079 each carry an N-linked (GlcNAc...) asparagine; by host glycan. Intrachain disulfides connect C1068/C1080, C1110/C1185, C1115/C1189, and C1137/C1179. The chain crosses the membrane as a helical span at residues 1225 to 1245; sequence GVGLVVAVAALILIVVLCVSF. C1242 carries S-palmitoyl cysteine; by host lipidation. C1242 carries the S-stearoyl cysteine; by host lipid modification. At 1246–1248 the chain is on the cytoplasmic side; it reads SRH.

It belongs to the alphavirus structural polyprotein family. In terms of assembly, homodimer. Homomultimer. Interacts with host karyopherin KPNA4; this interaction allows the nuclear import of the viral capsid protein. Interacts with spike glycoprotein E2. Interacts with host IRAK1; the interaction leads to inhibition of IRAK1-dependent signaling. As to quaternary structure, the precursor of protein E3/E2 and E1 form a heterodimer shortly after synthesis. Interacts with spike glycoprotein E2. The precursor of protein E3/E2 and E1 form a heterodimer shortly after synthesis. Processing of the precursor of protein E3/E2 into E2 and E3 results in a heterodimer of the spike glycoproteins E2 and E1. Spike at virion surface are constituted of three E2-E1 heterodimers. After target cell attachment and endocytosis, E1 changes conformation to form homotrimers. Interacts with 6K protein. Interacts with host MXRA8; this interaction mediates virus entry. The interaction involves 2 adjacent E2-E1 heterodimers. In terms of assembly, interacts with spike glycoprotein E1. Processing of the precursor of protein E3/E2 into E2 and E3 results in a heterodimer of the spike glycoproteins E2 and E1. Spike at virion surface are constituted of a trimer of E2-E1 heterodimers. Interacts with 6K protein. Interacts with host MXRA8; this interaction mediates virus entry. The interaction involves 2 adjacent E2-E1 heterodimers. As to quaternary structure, oligomer. Interacts with spike glycoprotein E1. Interacts with spike glycoprotein E2. In terms of processing, specific enzymatic cleavages in vivo yield mature proteins. Capsid protein is auto-cleaved during polyprotein translation, unmasking a signal peptide at the N-terminus of the precursor of E3/E2. The remaining polyprotein is then targeted to the host endoplasmic reticulum, where host signal peptidase cleaves it into pE2, 6K and E1 proteins. pE2 is further processed to mature E3 and E2 by host furin in trans-Golgi vesicle. Palmitoylated via thioester bonds. These palmitoylations may induce disruption of the C-terminus transmembrane. This would result in the reorientation of E2 C-terminus from lumenal to cytoplasmic side. Post-translationally, N-glycosylated. In terms of processing, palmitoylated via thioester bonds.

It localises to the virion. The protein resides in the host cytoplasm. Its subcellular location is the host cell membrane. The protein localises to the host nucleus. It is found in the virion membrane. It localises to the host Golgi apparatus. The protein resides in the host trans-Golgi network. Its subcellular location is the host endoplasmic reticulum. It carries out the reaction Autocatalytic release of the core protein from the N-terminus of the togavirus structural polyprotein by hydrolysis of a -Trp-|-Ser- bond.. Its function is as follows. Forms an icosahedral capsid with a T=4 symmetry composed of 240 copies of the capsid protein surrounded by a lipid membrane through which penetrate 80 spikes composed of trimers of E1-E2 heterodimers. The capsid protein binds to the viral RNA genome at a site adjacent to a ribosome binding site for viral genome translation following genome release. Possesses a protease activity that results in its autocatalytic cleavage from the nascent structural protein. Following its self-cleavage, the capsid protein transiently associates with ribosomes, and within several minutes the protein binds to viral RNA and rapidly assembles into icosahedric core particles. The resulting nucleocapsid eventually associates with the cytoplasmic domain of the spike glycoprotein E2 at the cell membrane, leading to budding and formation of mature virions. In case of infection, new virions attach to target cells and after clathrin-mediated endocytosis their membrane fuses with the host endosomal membrane. This leads to the release of the nucleocapsid into the cytoplasm, followed by an uncoating event necessary for the genomic RNA to become accessible. The uncoating might be triggered by the interaction of capsid proteins with ribosomes. Binding of ribosomes would release the genomic RNA since the same region is genomic RNA-binding and ribosome-binding. Specifically inhibits interleukin-1 receptor-associated kinase 1/IRAK1-dependent signaling during viral entry, representing a means by which the alphaviruses may evade innate immune detection and activation prior to viral gene expression. Degrades host cyclic GMP-AMP synthase (CGAS) thereby inhibiting the cGAS-STING pathway. Functionally, provides the signal sequence for the translocation of the precursor of protein E3/E2 to the host endoplasmic reticulum. Furin-cleaved E3 remains associated with spike glycoprotein E1 and mediates pH protection of the latter during the transport via the secretory pathway. After virion release from the host cell, the assembly protein E3 is gradually released in the extracellular space. In terms of biological role, plays a role in viral attachment to target host cell, by binding to the cell receptor MXRA8. Synthesized as a p62 precursor which is processed by furin at the cell membrane just before virion budding, giving rise to E2-E1 heterodimer. The p62-E1 heterodimer is stable, whereas E2-E1 is unstable and dissociate at low pH. p62 is processed at the last step, presumably to avoid E1 fusion activation before its final export to cell surface. E2 C-terminus contains a transitory transmembrane that would be disrupted by palmitoylation, resulting in reorientation of the C-terminal tail from lumenal to cytoplasmic side. This step is critical since E2 C-terminus is involved in budding by interacting with capsid proteins. This release of E2 C-terminus in cytoplasm occurs lately in protein export, and precludes premature assembly of particles at the endoplasmic reticulum membrane. Acts as a viroporin that participates in virus glycoprotein processing and transport to the plasma membrane, cell permeabilization and budding of viral particles. Disrupts the calcium homeostasis of the cell, probably at the endoplasmic reticulum level. This leads to cytoplasmic calcium elevation. Because of its lipophilic properties, the 6K protein is postulated to influence the selection of lipids that interact with the transmembrane domains of the glycoproteins, which, in turn, affects the deformability of the bilayer required for the extreme curvature that occurs as budding proceeds. Present in low amount in virions, about 3% compared to viral glycoproteins. Its function is as follows. Class II viral fusion protein. Fusion activity is inactive as long as E1 is bound to E2 in mature virion. After virus attachment to target cell and endocytosis, acidification of the endosome induce dissociation of E1/E2 heterodimer and concomitant trimerization of the E1 subunits. This E1 trimer is fusion active, and promotes release of viral nucleocapsid in cytoplasm after endosome and viral membrane fusion. Efficient fusion requires the presence of cholesterol and sphingolipid in the target membrane. In Chikungunya virus (strain S27-African prototype) (CHIKV), this protein is Structural polyprotein.